A 170-amino-acid polypeptide reads, in one-letter code: MGIVIGKIELNSEKQIIGELKKKIKGINLNVAQKVIMLSGNVASLKGNTLLKSQEKQILEILQSFKGLYDYTYGLKVEALDKIRRLENVYRYIRVIKGYPIKGRTKSNANTAKRQASPGGNKKLKIMDILKKKPTNRKERRIFNKIKKLQDKHNKQQQKNKKSKKWKTKK.

Residues 130–170 (LKKKPTNRKERRIFNKIKKLQDKHNKQQQKNKKSKKWKTKK) are disordered. 2 stretches are compositionally biased toward basic residues: residues 132 to 147 (KKPTNRKERRIFNKIK) and 155 to 170 (KQQQKNKKSKKWKTKK).

Belongs to the universal ribosomal protein uS13 family. In terms of assembly, part of the small ribosomal subunit.

Its subcellular location is the mitochondrion. Its function is as follows. Located at the top of the head of the small subunit, it contacts several helices of the small subunit rRNA. This Dictyostelium citrinum (Slime mold) protein is Small ribosomal subunit protein uS13m (mrps13).